The chain runs to 289 residues: tRNA-cytidine(32) 2-sulfurtransferase (289 aa).

The PP-loop motif motif lies at serine 49–serine 54. Residues cysteine 124, cysteine 127, and cysteine 215 each coordinate [4Fe-4S] cluster.

It belongs to the TtcA family. Homodimer. It depends on Mg(2+) as a cofactor. [4Fe-4S] cluster serves as cofactor.

The protein localises to the cytoplasm. It carries out the reaction cytidine(32) in tRNA + S-sulfanyl-L-cysteinyl-[cysteine desulfurase] + AH2 + ATP = 2-thiocytidine(32) in tRNA + L-cysteinyl-[cysteine desulfurase] + A + AMP + diphosphate + H(+). It functions in the pathway tRNA modification. Its function is as follows. Catalyzes the ATP-dependent 2-thiolation of cytidine in position 32 of tRNA, to form 2-thiocytidine (s(2)C32). The sulfur atoms are provided by the cysteine/cysteine desulfurase (IscS) system. This Methylococcus capsulatus (strain ATCC 33009 / NCIMB 11132 / Bath) protein is tRNA-cytidine(32) 2-sulfurtransferase.